The sequence spans 62 residues: Photosystem II reaction center protein Z (62 aa).

Transmembrane regions (helical) follow at residues 8–28 (AVFA…VVFA) and 41–61 (FSGT…NSLI).

It belongs to the PsbZ family. PSII is composed of 1 copy each of membrane proteins PsbA, PsbB, PsbC, PsbD, PsbE, PsbF, PsbH, PsbI, PsbJ, PsbK, PsbL, PsbM, PsbT, PsbY, PsbZ, Psb30/Ycf12, at least 3 peripheral proteins of the oxygen-evolving complex and a large number of cofactors. It forms dimeric complexes.

It is found in the plastid. The protein resides in the chloroplast thylakoid membrane. In terms of biological role, may control the interaction of photosystem II (PSII) cores with the light-harvesting antenna, regulates electron flow through the 2 photosystem reaction centers. PSII is a light-driven water plastoquinone oxidoreductase, using light energy to abstract electrons from H(2)O, generating a proton gradient subsequently used for ATP formation. This is Photosystem II reaction center protein Z from Gossypium barbadense (Sea Island cotton).